Reading from the N-terminus, the 332-residue chain is Holliday junction branch migration complex subunit RuvB (332 aa).

Residues methionine 1–tyrosine 181 are large ATPase domain (RuvB-L). ATP-binding positions include leucine 20, arginine 21, glycine 62, lysine 65, threonine 66, threonine 67, glutamate 128 to phenylalanine 130, arginine 171, tyrosine 181, and arginine 218. Threonine 66 provides a ligand contact to Mg(2+). Residues glutamine 182–aspartate 252 are small ATPAse domain (RuvB-S). A head domain (RuvB-H) region spans residues arginine 255–threonine 332. Positions 291, 310, 312, and 315 each coordinate DNA.

It belongs to the RuvB family. Homohexamer. Forms an RuvA(8)-RuvB(12)-Holliday junction (HJ) complex. HJ DNA is sandwiched between 2 RuvA tetramers; dsDNA enters through RuvA and exits via RuvB. An RuvB hexamer assembles on each DNA strand where it exits the tetramer. Each RuvB hexamer is contacted by two RuvA subunits (via domain III) on 2 adjacent RuvB subunits; this complex drives branch migration. In the full resolvosome a probable DNA-RuvA(4)-RuvB(12)-RuvC(2) complex forms which resolves the HJ.

The protein localises to the cytoplasm. It carries out the reaction ATP + H2O = ADP + phosphate + H(+). In terms of biological role, the RuvA-RuvB-RuvC complex processes Holliday junction (HJ) DNA during genetic recombination and DNA repair, while the RuvA-RuvB complex plays an important role in the rescue of blocked DNA replication forks via replication fork reversal (RFR). RuvA specifically binds to HJ cruciform DNA, conferring on it an open structure. The RuvB hexamer acts as an ATP-dependent pump, pulling dsDNA into and through the RuvAB complex. RuvB forms 2 homohexamers on either side of HJ DNA bound by 1 or 2 RuvA tetramers; 4 subunits per hexamer contact DNA at a time. Coordinated motions by a converter formed by DNA-disengaged RuvB subunits stimulates ATP hydrolysis and nucleotide exchange. Immobilization of the converter enables RuvB to convert the ATP-contained energy into a lever motion, pulling 2 nucleotides of DNA out of the RuvA tetramer per ATP hydrolyzed, thus driving DNA branch migration. The RuvB motors rotate together with the DNA substrate, which together with the progressing nucleotide cycle form the mechanistic basis for DNA recombination by continuous HJ branch migration. Branch migration allows RuvC to scan DNA until it finds its consensus sequence, where it cleaves and resolves cruciform DNA. This is Holliday junction branch migration complex subunit RuvB from Streptococcus pyogenes serotype M12 (strain MGAS9429).